The following is a 396-amino-acid chain: MSNDFLFTSESVSEGHPDKVADQISDAILDAILAQDKYARVAAETLCNTGLVVLAGEITTTANVDYIHVARETIKRIGYDNTEYGIDYKGCAVLVAYDKQSPDIAQGVDRASDDYLNQGAGDQGLMFGYACDETPELMPFPIYYAHRLVERQSQLRRDGRLPWLRPDAKSQVTVRYVDGKPHSVDTVVLSTQHAPEMSQEAIREAVIEEIIKPVLPSHMLAETKYLVNPTGRFVIGGPQGDCGLTGRKIIVDTYGGAAPHGGGAFSGKDPSKVDRSAAYAARYVAKNVVAAGLARQCQVQVSYAIGVARPINITVYTEGTGVIPDEQIAKLVQEHFDLRPKGIVQMLDLLRPVYEKTAAYGHFGREEPEFSWEATDKVLLLREAAGLAGEPAKAFA.

H16 lines the ATP pocket. D18 contacts Mg(2+). Residue E44 participates in K(+) binding. 2 residues coordinate L-methionine: E57 and Q100. Residues 100 to 110 (QSPDIAQGVDR) form a flexible loop region. Residues 167–169 (DAK), 232–233 (RF), D241, 247–248 (RK), A264, and K268 each bind ATP. D241 lines the L-methionine pocket. K272 is an L-methionine binding site.

Belongs to the AdoMet synthase family. As to quaternary structure, homotetramer; dimer of dimers. It depends on Mg(2+) as a cofactor. K(+) serves as cofactor.

It is found in the cytoplasm. It catalyses the reaction L-methionine + ATP + H2O = S-adenosyl-L-methionine + phosphate + diphosphate. It participates in amino-acid biosynthesis; S-adenosyl-L-methionine biosynthesis; S-adenosyl-L-methionine from L-methionine: step 1/1. Its function is as follows. Catalyzes the formation of S-adenosylmethionine (AdoMet) from methionine and ATP. The overall synthetic reaction is composed of two sequential steps, AdoMet formation and the subsequent tripolyphosphate hydrolysis which occurs prior to release of AdoMet from the enzyme. In Ralstonia pickettii (strain 12J), this protein is S-adenosylmethionine synthase.